The primary structure comprises 466 residues: Alpha-1A adrenergic receptor (466 aa).

Topologically, residues 1 to 27 (MVLLSENASEGSNCTHPPAQVNISKAI) are extracellular. Residues N7, N13, and N22 are each glycosylated (N-linked (GlcNAc...) asparagine). The chain crosses the membrane as a helical span at residues 28 to 51 (LLGVILGGLIIFGVLGNILVILSV). The Cytoplasmic portion of the chain corresponds to 52–64 (ACHRHLHSVTHYY). Residues 65 to 88 (IVNLAVADLLLTSTVLPFSAIFEI) form a helical membrane-spanning segment. At 89–99 (LGYWAFGRVFC) the chain is on the extracellular side. A disulfide bridge links C99 with C176. The chain crosses the membrane as a helical span at residues 100–122 (NIWAAVDVLCCTASIMGLCIISI). The Cytoplasmic portion of the chain corresponds to 123–143 (DRYIGVSYPLRYPTIVTQRRG). Residues 144–167 (VRALLCVWALSLVISIGPLFGWRQ) traverse the membrane as a helical segment. The Extracellular segment spans residues 168–181 (QAPEDETICQINEE). Residues 182-205 (PGYVLFSALGSFYVPLTIILVMYC) form a helical membrane-spanning segment. Residues 206 to 273 (RVYVVAKRES…FSREKKAAKT (68 aa)) are Cytoplasmic-facing. S215 carries the phosphoserine; by PKA modification. Residues 274 to 297 (LGIVVGCFVLCWLPFFLVMPIGSF) form a helical membrane-spanning segment. The Extracellular portion of the chain corresponds to 298-305 (FPNFKPPE). A helical membrane pass occupies residues 306–329 (TVFKIVFWLGYLNSCINPIIYPCS). Residues 330 to 466 (SQEFKKAFQN…ISLGENGEEV (137 aa)) are Cytoplasmic-facing. The Nuclear localization signal motif lies at 334 to 349 (KKAFQNVLRIQCLRRR). C345 is lipidated: S-palmitoyl cysteine.

This sequence belongs to the G-protein coupled receptor 1 family. Adrenergic receptor subfamily. ADRA1A sub-subfamily. As to quaternary structure, homo- and heterooligomer. Heterooligomerizes with ADRA1B homooligomers in cardiac myocytes. Interacts with CAVIN4.

It localises to the nucleus membrane. The protein resides in the cell membrane. Its subcellular location is the cytoplasm. It is found in the membrane. The protein localises to the caveola. Functionally, this alpha-adrenergic receptor mediates its action by association with G proteins that activate a phosphatidylinositol-calcium second messenger system. Its effect is mediated by G(q) and G(11) proteins. Nuclear ADRA1A-ADRA1B heterooligomers regulate phenylephrine (PE)-stimulated ERK signaling in cardiac myocytes. In Mus musculus (Mouse), this protein is Alpha-1A adrenergic receptor (Adra1a).